We begin with the raw amino-acid sequence, 115 residues long: ATP synthase subunits region ORF 7 (115 aa).

The polypeptide is ATP synthase subunits region ORF 7 (Fuscovulum blasticum (Rhodobacter blasticus)).